The primary structure comprises 178 residues: Fibroin heavy chain (178 aa).

Positions M1–A21 are cleaved as a signal peptide. A highly repetitive region spans residues A149–A178.

As to quaternary structure, silk fibroin elementary unit consists in a disulfide-linked heavy and light chain and a p25 glycoprotein in molar ratios of 6:6:1. This results in a complex of approximately 2.3 MDa. The interchain disulfide bridge is essential for the intracellular transport and secretion of fibroin. In terms of tissue distribution, produced exclusively in the posterior (PSG) section of silk glands, which are essentially modified salivary glands.

Its function is as follows. Core component of the silk filament; a strong, insoluble and chemically inert fiber. In Bombyx mandarina (Wild silk moth), this protein is Fibroin heavy chain (FIBH).